Reading from the N-terminus, the 750-residue chain is Tegument protein UL46 homolog (750 aa).

4 disordered regions span residues 437–484 (FCCP…SPRT), 525–593 (QRSD…DYMR), 610–669 (YTPY…EVVY), and 692–750 (SASR…VSSL). The segment covering 465–484 (LRSSRQLPTSPPSNIVSPRT) has biased composition (polar residues). Residues 528-540 (DSSSSDNSTCSST) show a composition bias toward low complexity. A compositionally biased stretch (polar residues) spans 541–553 (ETQYITLPSTPSP). Basic and acidic residues-rich tracts occupy residues 710-727 (VCRE…DGFI) and 739-750 (KHPDQTERVSSL).

The protein belongs to the herpesviridae HHV-1 VP11/12 protein family.

It is found in the virion tegument. It localises to the host cell membrane. In terms of biological role, modulates alpha trans-inducing factor-dependent activation of alpha genes. The chain is Tegument protein UL46 homolog from Equine herpesvirus 1 (strain V592) (EHV-1).